A 131-amino-acid polypeptide reads, in one-letter code: Large ribosomal subunit protein bL17 (131 aa).

This sequence belongs to the bacterial ribosomal protein bL17 family. Part of the 50S ribosomal subunit. Contacts protein L32.

This Burkholderia ambifaria (strain MC40-6) protein is Large ribosomal subunit protein bL17.